The sequence spans 252 residues: MKTVTVKNLIIGEGMPKIIVSLMGRDINSVKAEALAYREATFDILEWRVDHFMDIASTQSVLTAARVIRDAMPDIPLLFTFRSAKEGGEQTITTQHYLSLNRAAIDSGLVDMIDLELFTGDADVKATVDYAHAHNVYVVMSNHDFHQTPSAEEMVLRLRKMQALGADIPKIAVMPQSKHDVLTLLTATLEMQQHYADRPVITMSMAKEGVISRLAGEVFGSAATFGAVKQASAPGQIAVNDLRSVLMILHNA.

3-dehydroquinate is bound by residues serine 21, 46 to 48 (EWR), and arginine 82. Catalysis depends on histidine 143, which acts as the Proton donor/acceptor. The active-site Schiff-base intermediate with substrate is the lysine 170. 3-dehydroquinate-binding residues include arginine 213, serine 232, and glutamine 236.

This sequence belongs to the type-I 3-dehydroquinase family. Homodimer.

It catalyses the reaction 3-dehydroquinate = 3-dehydroshikimate + H2O. It functions in the pathway metabolic intermediate biosynthesis; chorismate biosynthesis; chorismate from D-erythrose 4-phosphate and phosphoenolpyruvate: step 3/7. In terms of biological role, involved in the third step of the chorismate pathway, which leads to the biosynthesis of aromatic amino acids. Catalyzes the cis-dehydration of 3-dehydroquinate (DHQ) and introduces the first double bond of the aromatic ring to yield 3-dehydroshikimate. This is 3-dehydroquinate dehydratase from Salmonella paratyphi A (strain ATCC 9150 / SARB42).